The chain runs to 320 residues: ATP-dependent 6-phosphofructokinase (320 aa).

G12 is a binding site for ATP. Residues 22 to 26 and 55 to 60 each bind ADP; these read RGVVR and RYSVSD. ATP contacts are provided by residues 73–74 and 103–106; these read RF and GDGS. D104 serves as a coordination point for Mg(2+). A substrate-binding site is contributed by 126–128; sequence TID. Catalysis depends on D128, which acts as the Proton acceptor. R155 provides a ligand contact to ADP. Substrate is bound by residues R163 and 170 to 172; that span reads MGR. Residues 186–188, K212, and 214–216 each bind ADP; these read GCE and KKH. Substrate-binding positions include E223, R244, and 250-253; that span reads HIQR.

This sequence belongs to the phosphofructokinase type A (PFKA) family. ATP-dependent PFK group I subfamily. Prokaryotic clade 'B1' sub-subfamily. As to quaternary structure, homotetramer. The cofactor is Mg(2+).

It localises to the cytoplasm. The enzyme catalyses beta-D-fructose 6-phosphate + ATP = beta-D-fructose 1,6-bisphosphate + ADP + H(+). It participates in carbohydrate degradation; glycolysis; D-glyceraldehyde 3-phosphate and glycerone phosphate from D-glucose: step 3/4. Its activity is regulated as follows. Allosterically activated by ADP and other diphosphonucleosides, and allosterically inhibited by phosphoenolpyruvate. Its function is as follows. Catalyzes the phosphorylation of D-fructose 6-phosphate to fructose 1,6-bisphosphate by ATP, the first committing step of glycolysis. This chain is ATP-dependent 6-phosphofructokinase, found in Buchnera aphidicola subsp. Acyrthosiphon pisum (strain 5A).